We begin with the raw amino-acid sequence, 425 residues long: Enolase (425 aa).

Residue glutamine 163 participates in (2R)-2-phosphoglycerate binding. Residue glutamate 205 is the Proton donor of the active site. Aspartate 242, glutamate 286, and aspartate 313 together coordinate Mg(2+). Residues lysine 338, arginine 367, serine 368, and lysine 389 each coordinate (2R)-2-phosphoglycerate. Lysine 338 functions as the Proton acceptor in the catalytic mechanism.

This sequence belongs to the enolase family. Requires Mg(2+) as cofactor.

The protein localises to the cytoplasm. It is found in the secreted. It localises to the cell surface. The catalysed reaction is (2R)-2-phosphoglycerate = phosphoenolpyruvate + H2O. Its pathway is carbohydrate degradation; glycolysis; pyruvate from D-glyceraldehyde 3-phosphate: step 4/5. In terms of biological role, catalyzes the reversible conversion of 2-phosphoglycerate (2-PG) into phosphoenolpyruvate (PEP). It is essential for the degradation of carbohydrates via glycolysis. The protein is Enolase of Helicobacter hepaticus (strain ATCC 51449 / 3B1).